Reading from the N-terminus, the 219-residue chain is MAKKKFSKDWIHQHINDPYVKLAQQKGYRARAAFKLIEILEVEKLLKKGDVVVDLGSAPGSWSQVVRERLAGPGGVVDGRIIALDLLPMEPIAGVEFFQGDFRDDEVLHELERRVGNHAVDLVISDMAPNLSGVGVADSARIQHVCDLALEFSCAHLKPNGVLIVKAFHGSGFSQIVQSFKQRFKRVVERKPKASRDKSSETFLVARDLKDPVLNQTTE.

S-adenosyl-L-methionine-binding residues include glycine 60, tryptophan 62, aspartate 85, aspartate 101, and aspartate 126. Lysine 166 acts as the Proton acceptor in catalysis.

Belongs to the class I-like SAM-binding methyltransferase superfamily. RNA methyltransferase RlmE family.

The protein resides in the cytoplasm. The catalysed reaction is uridine(2552) in 23S rRNA + S-adenosyl-L-methionine = 2'-O-methyluridine(2552) in 23S rRNA + S-adenosyl-L-homocysteine + H(+). In terms of biological role, specifically methylates the uridine in position 2552 of 23S rRNA at the 2'-O position of the ribose in the fully assembled 50S ribosomal subunit. This is Ribosomal RNA large subunit methyltransferase E from Bordetella avium (strain 197N).